Reading from the N-terminus, the 21-residue chain is Pollen allergen Ole e 7 (21 aa).

The chain is Pollen allergen Ole e 7 from Olea europaea (Common olive).